Consider the following 234-residue polypeptide: Sugar fermentation stimulation protein homolog (234 aa).

The protein belongs to the SfsA family.

The sequence is that of Sugar fermentation stimulation protein homolog from Shewanella pealeana (strain ATCC 700345 / ANG-SQ1).